A 457-amino-acid chain; its full sequence is Bifunctional protein GlmU (457 aa).

The interval 1-229 is pyrophosphorylase; the sequence is MDLAAVILAA…PVEVTGINDR (229 aa). Residues 8 to 11, K22, Q72, and 77 to 78 each bind UDP-N-acetyl-alpha-D-glucosamine; these read LAAG and GT. Residue D102 coordinates Mg(2+). UDP-N-acetyl-alpha-D-glucosamine contacts are provided by G139, E154, N169, and N227. N227 provides a ligand contact to Mg(2+). The linker stretch occupies residues 230 to 250; sequence RQLAEVEKYLRRRVLEDLMQS. Residues 251 to 457 form an N-acetyltransferase region; it reads GVTVLDPAST…WAAKKRDKKV (207 aa). 2 residues coordinate UDP-N-acetyl-alpha-D-glucosamine: R332 and K350. Catalysis depends on H362, which acts as the Proton acceptor. Residues Y365 and N376 each coordinate UDP-N-acetyl-alpha-D-glucosamine. Acetyl-CoA-binding positions include 385–386, S404, A422, and R439; that span reads NY.

It in the N-terminal section; belongs to the N-acetylglucosamine-1-phosphate uridyltransferase family. This sequence in the C-terminal section; belongs to the transferase hexapeptide repeat family. Homotrimer. Requires Mg(2+) as cofactor.

It is found in the cytoplasm. It carries out the reaction alpha-D-glucosamine 1-phosphate + acetyl-CoA = N-acetyl-alpha-D-glucosamine 1-phosphate + CoA + H(+). The catalysed reaction is N-acetyl-alpha-D-glucosamine 1-phosphate + UTP + H(+) = UDP-N-acetyl-alpha-D-glucosamine + diphosphate. It participates in nucleotide-sugar biosynthesis; UDP-N-acetyl-alpha-D-glucosamine biosynthesis; N-acetyl-alpha-D-glucosamine 1-phosphate from alpha-D-glucosamine 6-phosphate (route II): step 2/2. Its pathway is nucleotide-sugar biosynthesis; UDP-N-acetyl-alpha-D-glucosamine biosynthesis; UDP-N-acetyl-alpha-D-glucosamine from N-acetyl-alpha-D-glucosamine 1-phosphate: step 1/1. The protein operates within bacterial outer membrane biogenesis; LPS lipid A biosynthesis. Catalyzes the last two sequential reactions in the de novo biosynthetic pathway for UDP-N-acetylglucosamine (UDP-GlcNAc). The C-terminal domain catalyzes the transfer of acetyl group from acetyl coenzyme A to glucosamine-1-phosphate (GlcN-1-P) to produce N-acetylglucosamine-1-phosphate (GlcNAc-1-P), which is converted into UDP-GlcNAc by the transfer of uridine 5-monophosphate (from uridine 5-triphosphate), a reaction catalyzed by the N-terminal domain. This Pelotomaculum thermopropionicum (strain DSM 13744 / JCM 10971 / SI) protein is Bifunctional protein GlmU.